Reading from the N-terminus, the 331-residue chain is Pantothenate kinase (331 aa).

ATP is bound at residue 109-116 (GSVAVGKS).

This sequence belongs to the prokaryotic pantothenate kinase family.

It is found in the cytoplasm. It carries out the reaction (R)-pantothenate + ATP = (R)-4'-phosphopantothenate + ADP + H(+). Its pathway is cofactor biosynthesis; coenzyme A biosynthesis; CoA from (R)-pantothenate: step 1/5. This chain is Pantothenate kinase, found in Rhizobium etli (strain CIAT 652).